We begin with the raw amino-acid sequence, 175 residues long: Alpha-crystallin B chain (175 aa).

Met1 carries the post-translational modification N-acetylmethionine. Ser19 carries the post-translational modification Phosphoserine. The O-linked (GlcNAc) serine glycan is linked to Ser41. A phosphoserine mark is found at Ser45 and Ser59. The region spanning 56–164 (RAPSWIDTGL…PERTIPITRE (109 aa)) is the sHSP domain. His83 contributes to the Zn(2+) binding site. Lys92 bears the N6-acetyllysine mark. His104, Glu106, His111, and His119 together coordinate Zn(2+). The segment at 142-175 (VLTVNGPRKQASGPERTIPITREEKPAVTAAPKK) is disordered. The residue at position 166 (Lys166) is an N6-acetyllysine. The O-linked (GlcNAc) threonine glycan is linked to Thr170.

The protein belongs to the small heat shock protein (HSP20) family. As to quaternary structure, heteromer composed of three CRYAA and one CRYAB subunits. Aggregates with homologous proteins, including the small heat shock protein HSPB1, to form large heteromeric complexes. Inter-subunit bridging via zinc ions enhances stability, which is crucial as there is no protein turn over in the lens. Interacts with HSPBAP1 and TTN/titin. Interacts with TMEM109; in the cellular response to DNA damage. Interacts with DES; binds rapidly during early stages of DES filament assembly and a reduced binding seen in the later stages. Interacts with ATP6V1A and with MTOR, forming a ternary complex. Lens as well as other tissues.

Its subcellular location is the cytoplasm. The protein resides in the nucleus. The protein localises to the secreted. It is found in the lysosome. Its function is as follows. May contribute to the transparency and refractive index of the lens. Has chaperone-like activity, preventing aggregation of various proteins under a wide range of stress conditions. In lens epithelial cells, stabilizes the ATP6V1A protein, preventing its degradation by the proteasome. This chain is Alpha-crystallin B chain (CRYAB), found in Spalax judaei (Judean Mountains blind mole rat).